The following is an 895-amino-acid chain: AP-1 complex subunit gamma (895 aa).

5 HEAT repeats span residues 130-166 (TAMA…LRKV), 167-205 (PDLT…MDST), 211-256 (KKMV…ILGQ), 301-339 (NGLK…TDIQ), and 341-376 (VQRH…ESNI). Disordered stretches follow at residues 591 to 687 (KQEE…MNNM), 706 to 733 (NNNS…NNKS), and 746 to 770 (QLTP…QTSV). Composition is skewed to low complexity over residues 604–626 (PTQT…QSSQ), 639–658 (QSSA…GGNA), 675–687 (NGNM…MNNM), 706–731 (NNNS…NNNN), and 746–765 (QLTP…LSPT). Positions 775–893 (PQPLTFLVYQ…SDVPDTPLPS (119 aa)) constitute a GAE domain.

This sequence belongs to the adaptor complexes large subunit family. Adaptor protein complex 1 (AP-1) is a heterotetramer composed of two large adaptins (gamma-type subunit and beta-type subunit), a medium adaptin (mu-type subunit) and a small adaptin (sigma-type subunit). Interacts with rhgA.

Its subcellular location is the golgi apparatus. The protein localises to the trans-Golgi network. The protein resides in the cytoplasmic vesicle. It is found in the clathrin-coated vesicle membrane. Its function is as follows. Subunit of clathrin-associated adaptor protein complex 1 that plays a role in protein sorting in the trans-Golgi network (TGN) and endosomes. The AP complexes mediate the recruitment of clathrin to membranes and the recognition of sorting signals within the cytosolic tails of transmembrane cargo molecules. Also involved in early steps of phagocytosis and macropinocytosis. This chain is AP-1 complex subunit gamma (ap1g1), found in Dictyostelium discoideum (Social amoeba).